Here is a 213-residue protein sequence, read N- to C-terminus: Motile sperm domain-containing protein 1 (213 aa).

The region spanning 16–143 (PVFVFPTELI…KEHLTESLFF (128 aa)) is the MSP domain. Transmembrane regions (helical) follow at residues 159–179 (SLLT…PTLG) and 191–211 (LSVN…MAIL). The Nuclear export signal motif lies at 205-208 (LITM).

Its subcellular location is the endoplasmic reticulum membrane. The protein resides in the golgi apparatus membrane. Plays a role in differentiation and/or proliferation of mesenchymal stem cells. Proposed to be involved in epithelial-to-mesenchymal transition (EMT). However, another study suggests that it is not required for EMT or stem cell self-renewal and acts during later stages of differentiation. The sequence is that of Motile sperm domain-containing protein 1 (MOSPD1) from Pongo abelii (Sumatran orangutan).